Here is a 512-residue protein sequence, read N- to C-terminus: Cytokinin hydroxylase (512 aa).

The helical transmembrane segment at 2 to 22 (MVTLVLKYVLVIVMTLILRVL) threads the bilayer. C458 is a heme binding site.

This sequence belongs to the cytochrome P450 family. Requires heme as cofactor. Specifically expressed in roots.

Its subcellular location is the membrane. It carries out the reaction N(6)-(dimethylallyl)adenosine 5'-phosphate + NADPH + O2 + H(+) = 9-ribosyl-trans-zeatin 5'-phosphate + NADP(+) + H2O. It catalyses the reaction N(6)-(dimethylallyl)adenosine 5'-diphosphate + NADPH + O2 + H(+) = 9-ribosyl-trans-zeatin 5'-diphosphate + NADP(+) + H2O. The catalysed reaction is N(6)-(dimethylallyl)adenosine 5'-triphosphate + NADPH + O2 + H(+) = 9-ribosyl-trans-zeatin 5'-triphosphate + NADP(+) + H2O. In terms of biological role, cytokinin hydroxylase that catalyzes the biosynthesis of trans-zeatin via the isopentenyladenine riboside 5'-monophosphate (iPRMP)-dependent pathway. Can use isopentenyladenosine-5'-monophosphate, isopentenyladenosine-5'-diphosphate and isopentenyladenosine-5'-triphosphate as substrate. In Arabidopsis thaliana (Mouse-ear cress), this protein is Cytokinin hydroxylase (CYP735A2).